The sequence spans 464 residues: Arginine biosynthesis bifunctional protein ArgJ, chloroplastic (464 aa).

Thr-208, Lys-234, Thr-245, Glu-332, Asn-459, and Thr-464 together coordinate substrate. Residue Thr-245 is the Nucleophile of the active site.

Belongs to the ArgJ family. In terms of assembly, heterodimer of an alpha and a beta chain.

The protein resides in the plastid. The protein localises to the chloroplast. It catalyses the reaction N(2)-acetyl-L-ornithine + L-glutamate = N-acetyl-L-glutamate + L-ornithine. It carries out the reaction L-glutamate + acetyl-CoA = N-acetyl-L-glutamate + CoA + H(+). The protein operates within amino-acid biosynthesis; L-arginine biosynthesis; L-ornithine and N-acetyl-L-glutamate from L-glutamate and N(2)-acetyl-L-ornithine (cyclic): step 1/1. Its pathway is amino-acid biosynthesis; L-arginine biosynthesis; N(2)-acetyl-L-ornithine from L-glutamate: step 1/4. Catalyzes two activities which are involved in the cyclic version of arginine biosynthesis: the synthesis of acetylglutamate from glutamate and acetyl-CoA, and of ornithine by transacetylation between acetylornithine and glutamate. The chain is Arginine biosynthesis bifunctional protein ArgJ, chloroplastic from Sorghum bicolor (Sorghum).